Consider the following 259-residue polypeptide: DNA-directed RNA polymerase subunit Rpo3 (259 aa).

Belongs to the archaeal Rpo3/eukaryotic RPB3 RNA polymerase subunit family. As to quaternary structure, part of the RNA polymerase complex.

It is found in the cytoplasm. The enzyme catalyses RNA(n) + a ribonucleoside 5'-triphosphate = RNA(n+1) + diphosphate. Its function is as follows. DNA-dependent RNA polymerase (RNAP) catalyzes the transcription of DNA into RNA using the four ribonucleoside triphosphates as substrates. In Pyrococcus horikoshii (strain ATCC 700860 / DSM 12428 / JCM 9974 / NBRC 100139 / OT-3), this protein is DNA-directed RNA polymerase subunit Rpo3.